Reading from the N-terminus, the 224-residue chain is Heme response regulator HssR (224 aa).

One can recognise a Response regulatory domain in the interval 3-116 (QCLVVDDDPR…ELIFRIRAVL (114 aa)). D52 carries the 4-aspartylphosphate modification. The segment at residues 124 to 222 (NSEMTIGNLT…VRGQGYKVEN (99 aa)) is a DNA-binding region (ompR/PhoB-type).

In terms of processing, phosphorylated by HssS.

The protein resides in the cytoplasm. Functionally, member of the two-component regulatory system HssS/HssR involved in intracellular heme homeostasis and tempering of staphylococcal virulence. Phosphorylated HssR binds to a direct repeat sequence within hrtAB promoter and activates the expression of hrtAB, an efflux pump, in response to extracellular heme, hemin, hemoglobin or blood. The sequence is that of Heme response regulator HssR (hssR) from Staphylococcus aureus (strain COL).